We begin with the raw amino-acid sequence, 298 residues long: Dioxygenase aneA (298 aa).

Fe cation-binding residues include histidine 134, aspartate 136, and histidine 213.

Belongs to the PhyH family. In terms of assembly, homodimer. Requires Fe cation as cofactor.

The enzyme catalyses aculene D + 2-oxoglutarate + O2 = aculene C + succinate + CO2 + H2O. It carries out the reaction aculene B + 2-oxoglutarate + O2 = aculene A + succinate + CO2 + H2O. It participates in secondary metabolite biosynthesis. Its function is as follows. Dioxygenase; part of the gene cluster that mediates the biosynthesis of aculenes, a unique type of norsesquiterpenes that contain a nordaucane skeleton linked to an L-proline moiety and are of mixed biosynthetic origin. The pathway begins with the synthesis of dauca-4,7-diene by the terpene cyclase aneC using farnesyl pyrophosphate (FPP) as substrate. The cytochrome P450 monooxygenase aneF then performs the initial oxidation at C-12 of dauca-4,7-diene to yield asperaculane D. Asperaculane D is substrate of the cytochrome P450 monooxygenase aneD for C-10 hydroxylation to yield asperaculane E. The cytochrome P450 monooxygenase aneG then converts asperaculane E into aculene D via C-2 oxidation. The monomodular nonribosomal peptide synthase aneB adenylates L-proline and the thiohydrolase aneE transfers this activated L-proline derivative to aculenes D and C to produce respectively aculenes B and A. The dioxygenase aneA converts aculene D into aculene C, and aculene B into aculene A by introducing the 5,6-alkene moiety. Asperculanes A, B, C and F, as well as 14-prolyl asperculane C, might be shunt products of the pathway. This is Dioxygenase aneA from Aspergillus aculeatus (strain ATCC 16872 / CBS 172.66 / WB 5094).